A 242-amino-acid polypeptide reads, in one-letter code: Myogenic factor 6 (242 aa).

The interval 31 to 63 (SPLYPGSDGTLSPCQDQMPPEAGSDSSGEEHVL) is disordered. A bHLH domain is found at 93–144 (DRRKAATLRERRRLKKINEAFEALKRRTVANPNQRLPKVEILRSAINYIERL).

Efficient DNA binding requires dimerization with another bHLH protein.

The protein localises to the nucleus. Functionally, involved in muscle differentiation (myogenic factor). Induces fibroblasts to differentiate into myoblasts. Probable sequence specific DNA-binding protein. The polypeptide is Myogenic factor 6 (MYF6) (Sus scrofa (Pig)).